Consider the following 77-residue polypeptide: Large ribosomal subunit protein uL29 (77 aa).

It belongs to the universal ribosomal protein uL29 family.

This is Large ribosomal subunit protein uL29 from Mycolicibacterium smegmatis (strain ATCC 700084 / mc(2)155) (Mycobacterium smegmatis).